The chain runs to 180 residues: Large ribosomal subunit protein uL5c (180 aa).

Belongs to the universal ribosomal protein uL5 family. Part of the 50S ribosomal subunit; contacts the 5S rRNA.

The protein localises to the plastid. It localises to the chloroplast. Binds 5S rRNA, forms part of the central protuberance of the 50S subunit. This chain is Large ribosomal subunit protein uL5c (rpl5), found in Chlorella vulgaris (Green alga).